The chain runs to 320 residues: 1,5-anhydro-D-fructose reductase (320 aa).

Y40 acts as the Proton donor in catalysis. Substrate is bound at residue H102. NADP(+) contacts are provided by residues Q194 and 265–277; that span reads IPGS…IKEN.

The protein belongs to the aldo/keto reductase family. Monomer.

It localises to the cytoplasm. The enzyme catalyses 1,5-anhydro-D-glucitol + NADP(+) = 1,5-anhydro-D-fructose + NADPH + H(+). Its activity is regulated as follows. Inhibited by p-chloromercuribenzoic acid and alkyliodines. Catalyzes the NADPH-dependent reduction of 1,5-anhydro-D-fructose (AF) to 1,5-anhydro-D-glucitol. This is 1,5-anhydro-D-fructose reductase (AKR1E2) from Macaca fascicularis (Crab-eating macaque).